Reading from the N-terminus, the 297-residue chain is Glycosylphosphatidylinositol anchor biosynthesis protein 11 (297 aa).

Over residues 1-18 (MTSASPSPLRAANAASSA) the composition is skewed to low complexity. Residues 1–26 (MTSASPSPLRAANAASSAPVPPPAMK) are disordered. 2 helical membrane-spanning segments follow: residues 44-64 (SFVHPAALLAILATRFQALVA) and 76-96 (FLALLQVTYVMVCLPPAGSVL). Positions 97 to 140 (PSPPASPVSDGDEKEKEKEKEKEKEKEKRKLPLRAGKLPRKKNQ) are disordered. Basic and acidic residues predominate over residues 107–126 (GDEKEKEKEKEKEKEKEKRK). A compositionally biased stretch (basic residues) spans 127–140 (LPLRAGKLPRKKNQ). N-linked (GlcNAc...) asparagine glycosylation occurs at Asn139. 4 consecutive transmembrane segments (helical) span residues 157–177 (LILTFLLATPVLSLLLVLFGA), 187–207 (VLCAAHMALLASTALIYVHGV), 225–245 (VWGGALGTALGAWFGAVPIPL), and 253–273 (AFPITILTGAYFGFAVGSVVC).

The protein belongs to the PIGF family.

Its subcellular location is the endoplasmic reticulum membrane. Its pathway is glycolipid biosynthesis; glycosylphosphatidylinositol-anchor biosynthesis. Functionally, acts in the GPI biosynthetic pathway between GlcNAc-PI synthesis and GPI transfer to protein. The protein is Glycosylphosphatidylinositol anchor biosynthesis protein 11 (gpi11) of Aspergillus fumigatus (strain ATCC MYA-4609 / CBS 101355 / FGSC A1100 / Af293) (Neosartorya fumigata).